Consider the following 216-residue polypeptide: ATP phosphoribosyltransferase (216 aa).

This sequence belongs to the ATP phosphoribosyltransferase family. Short subfamily. In terms of assembly, heteromultimer composed of HisG and HisZ subunits.

The protein localises to the cytoplasm. The enzyme catalyses 1-(5-phospho-beta-D-ribosyl)-ATP + diphosphate = 5-phospho-alpha-D-ribose 1-diphosphate + ATP. Its pathway is amino-acid biosynthesis; L-histidine biosynthesis; L-histidine from 5-phospho-alpha-D-ribose 1-diphosphate: step 1/9. In terms of biological role, catalyzes the condensation of ATP and 5-phosphoribose 1-diphosphate to form N'-(5'-phosphoribosyl)-ATP (PR-ATP). Has a crucial role in the pathway because the rate of histidine biosynthesis seems to be controlled primarily by regulation of HisG enzymatic activity. The polypeptide is ATP phosphoribosyltransferase (Synechococcus sp. (strain CC9902)).